A 415-amino-acid chain; its full sequence is Nacrein-like protein F (415 aa).

An N-linked (GlcNAc...) asparagine glycan is attached at asparagine 27. An Alpha-carbonic anhydrase domain is found at 33–414; the sequence is AGFSYDRSIC…KNKVTVYKSF (382 aa). Residues histidine 132, histidine 134, and histidine 157 each contribute to the Zn(2+) site. A disordered region spans residues 201 to 297; that stretch reads DEPDDEECKH…GENGHKHGCR (97 aa). Over residues 207–219 the composition is skewed to basic and acidic residues; the sequence is ECKHILKGHHPDN. A compositionally biased stretch (low complexity) spans 220–289; it reads NENGNGDNGN…NNGENGNNGE (70 aa). 22 repeat units span residues 225-227, 228-230, 231-233, 234-236, 237-239, 240-242, 243-245, 246-248, 249-251, 252-254, 255-257, 258-260, 261-263, 264-266, 267-269, 270-272, 273-275, 276-278, 279-281, 282-284, 285-286, and 288-290. The interval 225–290 is 22 X 3 AA approximate tandem repeats of G-X-N; the sequence is GDNGNNGYNG…NGENGNNGEN (66 aa). 355 to 356 provides a ligand contact to substrate; that stretch reads TT.

Belongs to the alpha-carbonic anhydrase family. In terms of assembly, homooligomer; disulfide-linked. May also be disulfide-linked to insoluble organic matrix. Zn(2+) is required as a cofactor. In terms of tissue distribution, expressed in the mantle.

The protein resides in the secreted. It is found in the extracellular space. Its subcellular location is the extracellular matrix. It carries out the reaction hydrogencarbonate + H(+) = CO2 + H2O. Its function is as follows. Acts as a negative regulator for calcification in the shells of mollusks. May function both as a calcium concentrator and as a carbonic anhydrase required for production of carbonate ions, which are assembled to CaCO(3) at mineralization sites. Is important for shell formation in both the calcitic prismatic layer and the aragonitic nacreous layer. Shows inhibitory activity of crystal formation when present in free state but, when attached to the insoluble matrix, may regulate the form and size of aragonite crystal. The chain is Nacrein-like protein F from Pinctada fucata (Akoya pearl oyster).